Reading from the N-terminus, the 3375-residue chain is Basement membrane proteoglycan (3375 aa).

Residues 1–22 (MKRSSTVLAALLALLLVATNDA) form the signal peptide. Residues 45-130 (VQITVFPSEK…NTVEARATLS (86 aa)) form the Ig-like C2-type 1 domain. Intrachain disulfides connect C66-C114, C149-C161, C156-C174, C168-C183, C190-C202, C197-C215, C209-C224, C233-C246, C240-C259, C253-C268, and C293-C344. LDL-receptor class A domains follow at residues 148–184 (QCMA…ANCP), 189–225 (TCEP…LNCN), and 232–269 (DCKP…VGCV). One can recognise an Ig-like C2-type 2 domain in the interval 271-355 (PTVVDPPQTN…AINVKGRVLA (85 aa)). The tract at residues 364-385 (VDDPRPQPPQPPTAPPQRASCD) is disordered. Residues 369-378 (PQPPQPPTAP) are compositionally biased toward pro residues. Cystine bridges form between C384–C400, C402–C411, and C414–C429. Residues 384–431 (CDTRGAVTPYPNNYGTCECKSQVTGPNCDQCKPGAFHLSEKSPEGCLK) enclose the Laminin EGF-like 1; truncated domain. The region spanning 432-441 (CFCFGVSNDC) is the Laminin EGF-like 2; first part domain. Residues 450 to 633 (KDRLMFAGDA…PDGLALEVEQ (184 aa)) enclose the Laminin IV type A 1 domain. Cystine bridges form between C634–C648, C636–C689, C691–C700, and C703–C718. The Laminin EGF-like 2; second part domain maps to 634–666 (CVCPPGYLGTSCEDCAPGYERSGYGPYLGTCVP). A Laminin EGF-like 3; truncated domain is found at 674–720 (CGPGAVAPTAPAQGQCQCKASVIGPNCDRCAPNSFGLAPTNPQGCIP). Residues 721–730 (CFCSGVTQQC) form the Laminin EGF-like 4; first part domain. Positions 740 to 921 (VSIDYARGDR…QGLTAAEVEQ (182 aa)) constitute a Laminin IV type A 2 domain. A Laminin EGF-like 4; second part domain is found at 922–954 (CICPPGYVGTSCEDCAPGYSRTGGGLYLGLCEK). Disulfide bonds link C955–C964, C957–C971, C974–C983, C986–C1002, C1011–C1021, C1013–C1027, C1030–C1039, C1042–C1058, C1061–C1069, C1063–C1079, C1082–C1091, C1094–C1109, C1152–C1200, C1247–C1294, and C1338–C1384. Laminin EGF-like domains lie at 955-1004 (CECN…DCQP), 1011-1060 (CHCN…DCTP), and 1061-1111 (CPCP…VCEP). Ig-like C2-type domains are found at residues 1126-1222 (PHEV…KRIS), 1226-1311 (PQPV…AVLE), 1319-1401 (PKVD…EPVQ), 1410-1499 (PQRG…ARLN), 1503-1585 (PQAI…RPVE), 1588-1680 (PARV…TPAT), 1690-1785 (PQVE…STLN), 1793-1878 (PRPV…VRLE), 1886-1970 (PTAV…GNVN), 1973-2069 (PSLT…IYIE), 2073-2163 (PSRI…AVHV), 2173-2260 (PKVE…TAVS), 2263-2343 (QQDK…GFVT), 2349-2435 (PDTI…RTVL), and 2446-2530 (TFTV…VDLQ). Residues 1388–1400 (DPSDNTPLQSEPV) are compositionally biased toward polar residues. 2 disordered regions span residues 1388-1426 (DPSD…QTVN) and 1478-1497 (EYEC…PPAR). Residue N1422 is glycosylated (N-linked (GlcNAc...) asparagine). 4 cysteine pairs are disulfide-bonded: C1435/C1481, C1527/C1573, C1618/C1663, and C1719/C1767. Residues 1481–1497 (CTSTEPDGSTQLSPPAR) are compositionally biased toward polar residues. The segment at 1773 to 1792 (NSPPVKTNPSTLNVTPEGTP) is disordered. Positions 1776–1788 (PVKTNPSTLNVTP) are enriched in polar residues. 15 disulfides stabilise this stretch: C1814-C1861, C1907-C1954, C1998-C2053, C2099-C2147, C2195-C2242, C2284-C2329, C2374-C2420, C2467-C2514, C2713-C2725, C2719-C2736, C2738-C2747, C2754-C2764, C2759-C2773, C2775-C2784, and C2935-C2960. Residues 1880 to 1918 (TEDQEPPTAVVEPRTWNGKPGERHQFRCITTGSPTPKIT) form a disordered region. Residues 1907–1918 (CITTGSPTPKIT) are compositionally biased toward polar residues. N-linked (GlcNAc...) asparagine glycosylation occurs at N2476. Residues 2532-2713 (DDFIPVIDGE…PSSVVKYDAC (182 aa)) form the Laminin G-like 1 domain. The Laminin G-like 2 domain occupies 2793–2960 (PLGFTSDTSF…LSSSGDISSC (168 aa)). A glycan (N-linked (GlcNAc...) asparagine) is linked at N2950. A compositionally biased stretch (low complexity) spans 2952–2963 (SSSGDISSCEES). Positions 2952 to 3124 (SSSGDISSCE…GTLPPDSSSE (173 aa)) are disordered. 2 stretches are compositionally biased toward acidic residues: residues 2979 to 2990 (EEPEAVIEEPTT) and 2999 to 3010 (PITEEPTEEPTT). A compositionally biased stretch (low complexity) spans 3011 to 3033 (TEEPTTTEEPTTTTEEPTTTTTE). Over residues 3034-3044 (EPYHIYETSRD) the composition is skewed to basic and acidic residues. Low complexity predominate over residues 3049–3079 (IIIPVETTTTSTTTTSTTEEPEAEPALVLPT). The segment covering 3081-3094 (PVEENDVSDEEEEI) has biased composition (acidic residues). Intrachain disulfides connect C3141/C3152, C3146/C3162, C3164/C3173, and C3333/C3359. Residues N3143 and N3156 are each glycosylated (N-linked (GlcNAc...) asparagine). The 180-residue stretch at 3180–3359 (EHAARFDGDA…AIDGKNVKPC (180 aa)) folds into the Laminin G-like 3 domain.

Component of an integrin containing attachment complex, composed of at least pat-2, pat-3, pat-4, pat-6, unc-52, unc-97 and unc-112. In terms of tissue distribution, detected on embryonic and adult body wall muscle cells (at protein level). Found in the basement membrane of all contractile tissues (at protein level). Expressed in gonadal sheath cells and spermatheca.

The protein resides in the secreted. It is found in the extracellular space. The protein localises to the extracellular matrix. Its subcellular location is the basement membrane. It localises to the cytoplasm. The protein resides in the myofibril. It is found in the sarcomere. The protein localises to the m line. Functionally, component of an integrin containing attachment complex, which is required for muscle development and maintenance. Probable structural role in myofilament assembly and/or attachment of the myofilament lattice to the cell membrane. May be an extracellular anchor for integrin receptors in body wall muscles and myoepithelial sheath cells. During the formation of neuromuscular junctions at the larval stage, negatively regulates membrane protrusion from body wall muscles, probably downstream of the integrin complex formed by pat-2 and pat-3. Involved in ovulation. Required for normal lifespan. The protein is Basement membrane proteoglycan of Caenorhabditis elegans.